The primary structure comprises 91 residues: Defensin-like protein 220 (91 aa).

Positions 1–19 (MKTIFFFITFIVLVSSCTS) are cleaved as a signal peptide. Disulfide bonds link Cys-61/Cys-78, Cys-64/Cys-83, and Cys-68/Cys-85.

It belongs to the DEFL family.

It is found in the secreted. In Arabidopsis thaliana (Mouse-ear cress), this protein is Defensin-like protein 220.